The sequence spans 303 residues: D-alanine--D-alanine ligase (303 aa).

An ATP-grasp domain is found at 104-300 (KLMWQAVGLP…FEKLVERVLE (197 aa)). 132-187 (IAKLGLPVFVKPSSEGSSVGVTKVKTVEQLLPAVEEALKFDSIVLVEAFLAGKEYS) is a binding site for ATP. Residues Asp-254, Glu-267, and Asn-269 each coordinate Mg(2+).

It belongs to the D-alanine--D-alanine ligase family. It depends on Mg(2+) as a cofactor. The cofactor is Mn(2+).

Its subcellular location is the cytoplasm. It catalyses the reaction 2 D-alanine + ATP = D-alanyl-D-alanine + ADP + phosphate + H(+). Its pathway is cell wall biogenesis; peptidoglycan biosynthesis. Its function is as follows. Cell wall formation. The chain is D-alanine--D-alanine ligase from Actinobacillus pleuropneumoniae serotype 5b (strain L20).